The following is a 187-amino-acid chain: MHDPKESLETNIQETESQEKLPETPIIEEEPILTLPDDQINQLQQEVAELKDQLIWQKAENENLRKRQARELENAYKFASERLLKDLLPVIDSLNLGLQAALDTENEAVKQFITGSEMTLTMFQETLARHGIEEINPVGEKFNPELHEAVTMTPSEAHEPNTVIQVTQKGYLLNGRTVRAAQVIVSK.

The interval 1–26 is disordered; that stretch reads MHDPKESLETNIQETESQEKLPETPI.

It belongs to the GrpE family. In terms of assembly, homodimer.

It is found in the cytoplasm. Participates actively in the response to hyperosmotic and heat shock by preventing the aggregation of stress-denatured proteins, in association with DnaK and GrpE. It is the nucleotide exchange factor for DnaK and may function as a thermosensor. Unfolded proteins bind initially to DnaJ; upon interaction with the DnaJ-bound protein, DnaK hydrolyzes its bound ATP, resulting in the formation of a stable complex. GrpE releases ADP from DnaK; ATP binding to DnaK triggers the release of the substrate protein, thus completing the reaction cycle. Several rounds of ATP-dependent interactions between DnaJ, DnaK and GrpE are required for fully efficient folding. In Dichelobacter nodosus (strain VCS1703A), this protein is Protein GrpE.